Here is a 344-residue protein sequence, read N- to C-terminus: S-adenosylmethionine:tRNA ribosyltransferase-isomerase (344 aa).

It belongs to the QueA family. Monomer.

It is found in the cytoplasm. The catalysed reaction is 7-aminomethyl-7-carbaguanosine(34) in tRNA + S-adenosyl-L-methionine = epoxyqueuosine(34) in tRNA + adenine + L-methionine + 2 H(+). It functions in the pathway tRNA modification; tRNA-queuosine biosynthesis. Its function is as follows. Transfers and isomerizes the ribose moiety from AdoMet to the 7-aminomethyl group of 7-deazaguanine (preQ1-tRNA) to give epoxyqueuosine (oQ-tRNA). This chain is S-adenosylmethionine:tRNA ribosyltransferase-isomerase, found in Lactiplantibacillus plantarum (strain ATCC BAA-793 / NCIMB 8826 / WCFS1) (Lactobacillus plantarum).